The primary structure comprises 966 residues: DNA mismatch repair protein MutS (966 aa).

709–716 (GPNMAGKS) contributes to the ATP binding site. The interval 894–914 (EGQRPPSSPAQPPAPPAPVVV) is disordered. Positions 899–912 (PSSPAQPPAPPAPV) are enriched in pro residues.

Belongs to the DNA mismatch repair MutS family.

In terms of biological role, this protein is involved in the repair of mismatches in DNA. It is possible that it carries out the mismatch recognition step. This protein has a weak ATPase activity. The sequence is that of DNA mismatch repair protein MutS from Chloroflexus aurantiacus (strain ATCC 29366 / DSM 635 / J-10-fl).